A 1756-amino-acid polypeptide reads, in one-letter code: Periplakin (1756 aa).

Position 14 is a phosphoserine (Ser14). Coiled-coil stretches lie at residues Thr16–Tyr125 and Lys188–Val389. Spectrin repeat units follow at residues Gln216–Lys317, His323–Gln485, Arg505–Asp612, and Glu733–Glu861. Positions Leu399–Thr455 constitute an SH3 domain. Residue Ser465 is modified to Phosphoserine. 2 coiled-coil regions span residues Leu585–Ser820 and Asp886–Val1645. Phosphoserine occurs at positions 887, 949, 1584, and 1657. Residues Glu1557 to Lys1756 form an interacts with BFSP2 and VIM region. Plectin repeat units follow at residues Glu1651–Phe1685 and Val1700–Tyr1735.

The protein belongs to the plakin or cytolinker family. Homodimer or a heterodimer with EVPL. Found in a complex composed of PPL (via C-terminal linker domain), BFSP1 and BFSP2 in the retinal lens. Within the complex interacts (via C-terminal linker domain) with BFSP2. Interacts with VIM. Binds to the PH domain of AKT1. Interacts with FCGR1A. May interact with PPHLN1. Expressed in stratified squamous epithelia and in some other epithelia.

It localises to the cell junction. It is found in the desmosome. The protein localises to the cytoplasm. The protein resides in the cytoskeleton. Its subcellular location is the cell membrane. Its function is as follows. Component of the cornified envelope of keratinocytes. May link the cornified envelope to desmosomes and intermediate filaments. May act as a localization signal in PKB/AKT-mediated signaling. The protein is Periplakin (PPL) of Homo sapiens (Human).